An 88-amino-acid chain; its full sequence is Small ribosomal subunit protein uS15 (88 aa).

It belongs to the universal ribosomal protein uS15 family. Part of the 30S ribosomal subunit. Forms a bridge to the 50S subunit in the 70S ribosome, contacting the 23S rRNA.

Its function is as follows. One of the primary rRNA binding proteins, it binds directly to 16S rRNA where it helps nucleate assembly of the platform of the 30S subunit by binding and bridging several RNA helices of the 16S rRNA. Functionally, forms an intersubunit bridge (bridge B4) with the 23S rRNA of the 50S subunit in the ribosome. This chain is Small ribosomal subunit protein uS15, found in Psychrobacter cryohalolentis (strain ATCC BAA-1226 / DSM 17306 / VKM B-2378 / K5).